We begin with the raw amino-acid sequence, 147 residues long: Sec-independent protein translocase protein TatB (147 aa).

The helical transmembrane segment at 2 to 22 (FDGIGFMELLLIGVLGLVVLG) threads the bilayer. The disordered stretch occupies residues 68-147 (ESKGLSNLSP…DTRSNPKANG (80 aa)). Residues 71-97 (GLSNLSPELQESIDQLKQAAQSVNRPY) show a composition bias toward polar residues. A compositionally biased stretch (low complexity) spans 112 to 133 (PASQSVSSEASPTASSAPTSEP).

It belongs to the TatB family. The Tat system comprises two distinct complexes: a TatABC complex, containing multiple copies of TatA, TatB and TatC subunits, and a separate TatA complex, containing only TatA subunits. Substrates initially bind to the TatABC complex, which probably triggers association of the separate TatA complex to form the active translocon.

The protein resides in the cell inner membrane. In terms of biological role, part of the twin-arginine translocation (Tat) system that transports large folded proteins containing a characteristic twin-arginine motif in their signal peptide across membranes. Together with TatC, TatB is part of a receptor directly interacting with Tat signal peptides. TatB may form an oligomeric binding site that transiently accommodates folded Tat precursor proteins before their translocation. The polypeptide is Sec-independent protein translocase protein TatB (Shewanella sp. (strain MR-4)).